Reading from the N-terminus, the 390-residue chain is Acetylornithine aminotransferase (390 aa).

Residues 103 to 104 (GT) and phenylalanine 129 contribute to the pyridoxal 5'-phosphate site. Arginine 132 contributes to the N(2)-acetyl-L-ornithine binding site. Residue 214–217 (DEVQ) coordinates pyridoxal 5'-phosphate. Lysine 243 is modified (N6-(pyridoxal phosphate)lysine). Serine 271 contacts N(2)-acetyl-L-ornithine. Residue threonine 272 coordinates pyridoxal 5'-phosphate. Lysine 304 participates in a covalent cross-link: Isoglutamyl lysine isopeptide (Lys-Gln) (interchain with Q-Cter in protein Pup).

The protein belongs to the class-III pyridoxal-phosphate-dependent aminotransferase family. ArgD subfamily. As to quaternary structure, homodimer. Pyridoxal 5'-phosphate serves as cofactor.

It is found in the cytoplasm. The catalysed reaction is N(2)-acetyl-L-ornithine + 2-oxoglutarate = N-acetyl-L-glutamate 5-semialdehyde + L-glutamate. Its pathway is amino-acid biosynthesis; L-arginine biosynthesis; N(2)-acetyl-L-ornithine from L-glutamate: step 4/4. The protein is Acetylornithine aminotransferase of Mycolicibacterium smegmatis (strain ATCC 700084 / mc(2)155) (Mycobacterium smegmatis).